The following is a 368-amino-acid chain: Endoglucanase (368 aa).

An N-terminal signal peptide occupies residues 1–21; sequence MNVLRSGLVTMLLLAAFSVQA. Catalysis depends on E55, which acts as the Proton donor. D116 acts as the Nucleophile in catalysis.

It belongs to the glycosyl hydrolase 8 (cellulase D) family.

It is found in the secreted. The enzyme catalyses Endohydrolysis of (1-&gt;4)-beta-D-glucosidic linkages in cellulose, lichenin and cereal beta-D-glucans.. It functions in the pathway glycan metabolism; bacterial cellulose biosynthesis. In terms of biological role, hydrolyzes carboxymethylcellulose. The sequence is that of Endoglucanase (bcsZ) from Escherichia coli O157:H7.